The chain runs to 578 residues: Proline--tRNA ligase (578 aa).

This sequence belongs to the class-II aminoacyl-tRNA synthetase family. ProS type 1 subfamily. Homodimer.

The protein resides in the cytoplasm. The enzyme catalyses tRNA(Pro) + L-proline + ATP = L-prolyl-tRNA(Pro) + AMP + diphosphate. Functionally, catalyzes the attachment of proline to tRNA(Pro) in a two-step reaction: proline is first activated by ATP to form Pro-AMP and then transferred to the acceptor end of tRNA(Pro). As ProRS can inadvertently accommodate and process non-cognate amino acids such as alanine and cysteine, to avoid such errors it has two additional distinct editing activities against alanine. One activity is designated as 'pretransfer' editing and involves the tRNA(Pro)-independent hydrolysis of activated Ala-AMP. The other activity is designated 'posttransfer' editing and involves deacylation of mischarged Ala-tRNA(Pro). The misacylated Cys-tRNA(Pro) is not edited by ProRS. The polypeptide is Proline--tRNA ligase (Syntrophus aciditrophicus (strain SB)).